A 62-amino-acid polypeptide reads, in one-letter code: MAKGVRIIITLECTECRTNPNKRSQGVSRYTSTKNRRNTTSRLELKKFCTHCNRHTVHKEIK.

Belongs to the bacterial ribosomal protein bL33 family.

The protein is Large ribosomal subunit protein bL33 of Trichodesmium erythraeum (strain IMS101).